We begin with the raw amino-acid sequence, 245 residues long: 1-(5-phosphoribosyl)-5-[(5-phosphoribosylamino)methylideneamino] imidazole-4-carboxamide isomerase (245 aa).

D11 (proton acceptor) is an active-site residue. Catalysis depends on D132, which acts as the Proton donor.

This sequence belongs to the HisA/HisF family.

The protein resides in the cytoplasm. It carries out the reaction 1-(5-phospho-beta-D-ribosyl)-5-[(5-phospho-beta-D-ribosylamino)methylideneamino]imidazole-4-carboxamide = 5-[(5-phospho-1-deoxy-D-ribulos-1-ylimino)methylamino]-1-(5-phospho-beta-D-ribosyl)imidazole-4-carboxamide. It participates in amino-acid biosynthesis; L-histidine biosynthesis; L-histidine from 5-phospho-alpha-D-ribose 1-diphosphate: step 4/9. This Geobacillus thermodenitrificans (strain NG80-2) protein is 1-(5-phosphoribosyl)-5-[(5-phosphoribosylamino)methylideneamino] imidazole-4-carboxamide isomerase.